The primary structure comprises 318 residues: MSNIIKYKKKILNGDLLTKEEVEELLEEGITDLAATANEIREFLCGNKFDLCTIINGKSGRCQENCKYCAQSSYFDTDIIEYNILHSDRIINSGISNYNKGVHRFSVVTSGRALNNNEVDTLCKTYSKLKEICSIRLCASHGLLKYEDLKRLKDSGVTRYHNNLETSKSFFKNICTTHTYNDKIETIKNAKKAGLEICSGGIIGLGETMEDRIDMAFTLRELSVESVPVNILNPIKGTPLENQEILSYEEIIKTLALFRFILPTVQIRLAGGRALLSDKGKKVLESGVNGAISGDMLTTLGIETSEDIKMIKNLGFEV.

In terms of domain architecture, Radical SAM core spans 44–273 (LCGNKFDLCT…TVQIRLAGGR (230 aa)). 3 residues coordinate [4Fe-4S] cluster: cysteine 62, cysteine 66, and cysteine 69. [2Fe-2S] cluster contacts are provided by serine 106, cysteine 138, cysteine 198, and arginine 268.

Belongs to the radical SAM superfamily. Biotin synthase family. As to quaternary structure, homodimer. It depends on [4Fe-4S] cluster as a cofactor. [2Fe-2S] cluster serves as cofactor.

The enzyme catalyses (4R,5S)-dethiobiotin + (sulfur carrier)-SH + 2 reduced [2Fe-2S]-[ferredoxin] + 2 S-adenosyl-L-methionine = (sulfur carrier)-H + biotin + 2 5'-deoxyadenosine + 2 L-methionine + 2 oxidized [2Fe-2S]-[ferredoxin]. It participates in cofactor biosynthesis; biotin biosynthesis; biotin from 7,8-diaminononanoate: step 2/2. In terms of biological role, catalyzes the conversion of dethiobiotin (DTB) to biotin by the insertion of a sulfur atom into dethiobiotin via a radical-based mechanism. The protein is Biotin synthase of Clostridium botulinum (strain Loch Maree / Type A3).